The sequence spans 811 residues: TLR4 interactor with leucine rich repeats (811 aa).

Positions 1–25 (MEAARALRLLLVVCGCLALPPLAEP) are cleaved as a signal peptide. One can recognise an LRRNT domain in the interval 26–57 (VCPERCDCQHPQHLLCTNRGLRVVPKTSSLPS). At 26–696 (VCPERCDCQH…AGSRGGVDYQ (671 aa)) the chain is on the extracellular side. LRR repeat units follow at residues 61-81 (VLTYSLGGNFITNITAFDFHR), 84-105 (QLRRLDLQYNQIRSLHPKTFEK), 108-129 (RLEELYLGNNLLQALAPGTLAP), 132-153 (KLRILYANGNEISRLSRGSFEG), 156-177 (SLVKLRLDGNALGALPDAVFAP), 180-201 (NLLYLHLESNRIRFLGKNAFAQ), 204-223 (KLRFLNLSANELQPSLRHAA), 230-251 (SLSSLILSANNLQHLGPRIFQH), 254-275 (RLGLLSLRGNQLTHLAPEAFWG), 278-299 (ALRELRLEGNRLSQLPTALLEP), 302-323 (SLEALDLSGNELSALHPATFGH), and 326-347 (RLRELSLRNNALSALSGDIFAA). N-linked (GlcNAc...) asparagine glycosylation occurs at N73. N-linked (GlcNAc...) asparagine glycosylation occurs at N209. One can recognise an LRRCT domain in the interval 359 to 416 (NGWTCDCRLRGLKRWMGDWHSQGRLLTVFVQCRHPPALRGKYLDYLDDQQLQNGSCAD). Positions 484–549 (LSRRGPGLQQ…PSPAGDPWQR (66 aa)) are disordered. Low complexity-rich tracts occupy residues 492 to 508 (QQPSPSVAAAAGPAPQS) and 530 to 544 (PTPTASPGSAPSPAG). N-linked (GlcNAc...) asparagine glycosylation occurs at N589. Residues 697–717 (LLTLALLTVNALLVLLALAAW) form a helical membrane-spanning segment. At 718–811 (ASRWLRRKLR…EDRLLQRFAD (94 aa)) the chain is on the cytoplasmic side. S798 is subject to Phosphoserine.

As to quaternary structure, belongs to the lipopolysaccharide (LPS) receptor, a multi-protein complex containing at least CD14, MD-2 and TLR4. Interacts with TLR4; this interaction is greatly enhanced by LPS stimulation. Interacts with LPS. In terms of processing, N-glycolysaled. In terms of tissue distribution, highly expressed in the brain, ovary, small intestine and spleen.

The protein resides in the membrane. In terms of biological role, component of the TLR4 signaling complex. Mediates the innate immune response to bacterial lipopolysaccharide (LPS) leading to cytokine secretion. The chain is TLR4 interactor with leucine rich repeats (TRIL) from Homo sapiens (Human).